The sequence spans 305 residues: MSNLPFTVAALYCFAPLPQYESLREPLAQLCCANGIKGTLLLAAEGINGTVAGSAGAIEKLIAHITAIPGLGEPELKYSHASEMPFHRMKVRLKREIVTMGVEGIDPLKSVGTYIAPKDWNALIADENTVVVDTRNDYEYAIGTFEGAIDPQTRTFREFPEWVKQNRDRLEGKKIAMFCTGGIRCEKATAFVKGLGFDDVYHLKGGILKYLEEVPREQSMWNGECFVFDERVAVGHGLAESDVELCRACRRPLTPQDKLSQFFEEGVSCAGCYAERTPEDRARYAERQKQVKLAEKRGANKHIGS.

The Rhodanese domain maps to 125–219 (ADENTVVVDT…YLEEVPREQS (95 aa)). C179 (cysteine persulfide intermediate) is an active-site residue.

Belongs to the TrhO family.

It catalyses the reaction uridine(34) in tRNA + AH2 + O2 = 5-hydroxyuridine(34) in tRNA + A + H2O. In terms of biological role, catalyzes oxygen-dependent 5-hydroxyuridine (ho5U) modification at position 34 in tRNAs. This is tRNA uridine(34) hydroxylase from Brucella ovis (strain ATCC 25840 / 63/290 / NCTC 10512).